The sequence spans 239 residues: Ribonuclease 3 (239 aa).

The 126-residue stretch at arginine 12–glycine 137 folds into the RNase III domain. Glutamate 50 provides a ligand contact to Mg(2+). Residue aspartate 54 is part of the active site. Aspartate 123 and glutamate 126 together coordinate Mg(2+). The active site involves glutamate 126. Residues aspartate 162–isoleucine 231 enclose the DRBM domain.

Belongs to the ribonuclease III family. Homodimer. Requires Mg(2+) as cofactor.

It is found in the cytoplasm. It carries out the reaction Endonucleolytic cleavage to 5'-phosphomonoester.. In terms of biological role, digests double-stranded RNA. Involved in the processing of primary rRNA transcript to yield the immediate precursors to the large and small rRNAs (23S and 16S). Processes some mRNAs, and tRNAs when they are encoded in the rRNA operon. Processes pre-crRNA and tracrRNA of type II CRISPR loci if present in the organism. In Rhizobium rhizogenes (strain K84 / ATCC BAA-868) (Agrobacterium radiobacter), this protein is Ribonuclease 3.